A 273-amino-acid polypeptide reads, in one-letter code: MAIHLYKTSTSSTRNGAVDSQVKSNPRNNLIYGQHHCGKGRNARGIITAGHRGGGHKRLYRKIDFRRNKKDISGRIVTIEYDPNRNAYICLIHYGDGEKRYILHPRGAIIGDTIVSGTEVPISMGNALPLTDMPLGTAIHNIEITLGKGGQLARAAGAVAKLIAKEGKSATLRLPSGEVRLISKNCSATVGQVGNVGANQQSLGRAGSKCWLGKRPVVRGVVMNPVDHPHGGGEGRAPIGRKKPTTPWGYPALGRRSRKRNKYSDRFILRRRK.

Disordered regions lie at residues Met-1–Lys-23 and Asn-224–Lys-273. A compositionally biased stretch (basic and acidic residues) spans Lys-262–Lys-273.

This sequence belongs to the universal ribosomal protein uL2 family. In terms of assembly, part of the 50S ribosomal subunit.

It localises to the plastid. Its subcellular location is the chloroplast. The protein is Large ribosomal subunit protein uL2cz/uL2cy (rpl2-A) of Acorus calamus var. americanus (American sweet flag).